A 258-amino-acid polypeptide reads, in one-letter code: Trans-aconitate 2-methyltransferase (258 aa).

It belongs to the methyltransferase superfamily. Tam family.

The protein resides in the cytoplasm. It carries out the reaction trans-aconitate + S-adenosyl-L-methionine = (E)-3-(methoxycarbonyl)pent-2-enedioate + S-adenosyl-L-homocysteine. Catalyzes the S-adenosylmethionine monomethyl esterification of trans-aconitate. The polypeptide is Trans-aconitate 2-methyltransferase (Yersinia pestis bv. Antiqua (strain Antiqua)).